Consider the following 287-residue polypeptide: Pyridoxal 5'-phosphate synthase subunit PdxS (287 aa).

Asp21 is a D-ribose 5-phosphate binding site. The active-site Schiff-base intermediate with D-ribose 5-phosphate is Lys78. Gly150 is a D-ribose 5-phosphate binding site. Arg162 is a binding site for D-glyceraldehyde 3-phosphate. D-ribose 5-phosphate is bound by residues Gly211 and 232 to 233 (GS).

Belongs to the PdxS/SNZ family. As to quaternary structure, in the presence of PdxT, forms a dodecamer of heterodimers.

The catalysed reaction is aldehydo-D-ribose 5-phosphate + D-glyceraldehyde 3-phosphate + L-glutamine = pyridoxal 5'-phosphate + L-glutamate + phosphate + 3 H2O + H(+). The protein operates within cofactor biosynthesis; pyridoxal 5'-phosphate biosynthesis. In terms of biological role, catalyzes the formation of pyridoxal 5'-phosphate from ribose 5-phosphate (RBP), glyceraldehyde 3-phosphate (G3P) and ammonia. The ammonia is provided by the PdxT subunit. Can also use ribulose 5-phosphate and dihydroxyacetone phosphate as substrates, resulting from enzyme-catalyzed isomerization of RBP and G3P, respectively. The polypeptide is Pyridoxal 5'-phosphate synthase subunit PdxS (Francisella philomiragia subsp. philomiragia (strain ATCC 25017 / CCUG 19701 / FSC 153 / O#319-036)).